The primary structure comprises 526 residues: Opine oxidase subunit A (526 aa).

C396, C398, C431, and C436 together coordinate [2Fe-2S] cluster.

It to T-protein and to dimethylglycine dehydrogenase. In terms of assembly, heterodimer of a subunit A and a subunit B. It depends on [2Fe-2S] cluster as a cofactor.

Its pathway is opine metabolism; octopine degradation. Oxidative cleavage of octopine into L-arginine and pyruvate. The polypeptide is Opine oxidase subunit A (ooxA) (Rhizobium meliloti (Ensifer meliloti)).